The following is a 533-amino-acid chain: Tyrosine-protein kinase transforming protein Fps (533 aa).

The interval 1–46 is disordered; it reads ASGQLHRPQPQEHTSTSAAAGTWRHTQASESRHRLPHCSAAPSHQD. The span at 11 to 29 shows a compositional bias: polar residues; sequence QEHTSTSAAAGTWRHTQAS. Residues 50 to 124 form the F-BAR; degenerate domain; sequence MGFGPELWCP…LQEDRQSVCS (75 aa). Residues 171–260 enclose the SH2 domain; the sequence is WYHGAIPRSE…KSGIVLTRAV (90 aa). Residues 272 to 525 enclose the Protein kinase domain; that stretch reads VLLGERIGRG…PSFGAVHQDL (254 aa). Residues 278-286 and Lys-301 each bind ATP; that span reads IGRGNFGEV. The active-site Proton acceptor is the Asp-394. Tyr-424 carries the phosphotyrosine; by autocatalysis modification.

This sequence belongs to the protein kinase superfamily. Tyr protein kinase family. Fes/fps subfamily.

It catalyses the reaction L-tyrosyl-[protein] + ATP = O-phospho-L-tyrosyl-[protein] + ADP + H(+). This chain is Tyrosine-protein kinase transforming protein Fps (V-FPS), found in Gallus gallus (Chicken).